The following is a 217-amino-acid chain: THAP domain-containing protein 2 (217 aa).

The THAP-type zinc finger occupies 1–80 (MPTNCAAAGC…LKMDAVPTIF (80 aa)). Positions 122–125 (EHSY) match the HCFC1-binding motif (HBM) motif.

The protein is THAP domain-containing protein 2 (Thap2) of Mus musculus (Mouse).